A 377-amino-acid polypeptide reads, in one-letter code: Mannan endo-1,4-beta-mannosidase A (377 aa).

Positions 1–18 (MKLSHMLLSLASLGVATA) are cleaved as a signal peptide. Trp84 contacts substrate. The N-linked (GlcNAc...) asparagine glycan is linked to Asn105. Asn197 contacts substrate. Residue Glu198 is the Proton donor of the active site. Asn255 carries N-linked (GlcNAc...) asparagine glycosylation. Tyr273 is a substrate binding site. Glu306 (nucleophile) is an active-site residue. Asn326 carries an N-linked (GlcNAc...) asparagine glycan. Trp336 serves as a coordination point for substrate. A glycan (N-linked (GlcNAc...) asparagine) is linked at Asn357.

It belongs to the glycosyl hydrolase 5 (cellulase A) family.

The protein localises to the secreted. The catalysed reaction is Random hydrolysis of (1-&gt;4)-beta-D-mannosidic linkages in mannans, galactomannans and glucomannans.. Functionally, endo-1,4-mannanase, a crucial enzyme for depolymerization of seed galactomannans and wood galactoglucomannans. The sequence is that of Mannan endo-1,4-beta-mannosidase A (manA) from Aspergillus aculeatus.